A 132-amino-acid polypeptide reads, in one-letter code: Female-specific protein 800 (132 aa).

Its function is as follows. FS800 is likely to have some function in the production or maintenance of the schistosome egg. It may have a function unrelated to eggshell formation. The sequence is that of Female-specific protein 800 from Schistosoma mansoni (Blood fluke).